We begin with the raw amino-acid sequence, 243 residues long: L-fucose operon activator (243 aa).

Residues 1 to 57 (MKAARQQAIVDLLLNHTSLTTEALSEQLKVSKETIRRDLNELQTQGKILRNHGRAKY) enclose the HTH deoR-type domain. A DNA-binding region (H-T-H motif) is located at residues 19–38 (LTTEALSEQLKVSKETIRRD).

In terms of biological role, transcriptional activator of the fuc operon. This Escherichia coli (strain K12) protein is L-fucose operon activator (fucR).